The primary structure comprises 92 residues: Small ribosomal subunit protein uS19 (92 aa).

This sequence belongs to the universal ribosomal protein uS19 family.

Its function is as follows. Protein S19 forms a complex with S13 that binds strongly to the 16S ribosomal RNA. This Prochlorococcus marinus (strain MIT 9312) protein is Small ribosomal subunit protein uS19.